Here is a 424-residue protein sequence, read N- to C-terminus: Serine hydroxymethyltransferase 2 (424 aa).

(6S)-5,6,7,8-tetrahydrofolate is bound by residues Leu125 and 129-131 (GHL). Position 234 is an N6-(pyridoxal phosphate)lysine (Lys234). Residue Glu250 coordinates (6S)-5,6,7,8-tetrahydrofolate.

The protein belongs to the SHMT family. As to quaternary structure, homodimer. The cofactor is pyridoxal 5'-phosphate.

It localises to the cytoplasm. The enzyme catalyses (6R)-5,10-methylene-5,6,7,8-tetrahydrofolate + glycine + H2O = (6S)-5,6,7,8-tetrahydrofolate + L-serine. The protein operates within one-carbon metabolism; tetrahydrofolate interconversion. It functions in the pathway amino-acid biosynthesis; glycine biosynthesis; glycine from L-serine: step 1/1. In terms of biological role, catalyzes the reversible interconversion of serine and glycine with tetrahydrofolate (THF) serving as the one-carbon carrier. This reaction serves as the major source of one-carbon groups required for the biosynthesis of purines, thymidylate, methionine, and other important biomolecules. Also exhibits THF-independent aldolase activity toward beta-hydroxyamino acids, producing glycine and aldehydes, via a retro-aldol mechanism. This chain is Serine hydroxymethyltransferase 2, found in Cupriavidus pinatubonensis (strain JMP 134 / LMG 1197) (Cupriavidus necator (strain JMP 134)).